Here is a 204-residue protein sequence, read N- to C-terminus: Elongation factor Ts (204 aa).

The involved in Mg(2+) ion dislocation from EF-Tu stretch occupies residues 80-83 (TDFV).

This sequence belongs to the EF-Ts family.

It is found in the cytoplasm. Functionally, associates with the EF-Tu.GDP complex and induces the exchange of GDP to GTP. It remains bound to the aminoacyl-tRNA.EF-Tu.GTP complex up to the GTP hydrolysis stage on the ribosome. The protein is Elongation factor Ts of Caldicellulosiruptor saccharolyticus (strain ATCC 43494 / DSM 8903 / Tp8T 6331).